Here is a 193-residue protein sequence, read N- to C-terminus: 3-isopropylmalate dehydratase small subunit (193 aa).

Belongs to the LeuD family. LeuD type 1 subfamily. Heterodimer of LeuC and LeuD.

It carries out the reaction (2R,3S)-3-isopropylmalate = (2S)-2-isopropylmalate. The protein operates within amino-acid biosynthesis; L-leucine biosynthesis; L-leucine from 3-methyl-2-oxobutanoate: step 2/4. Its function is as follows. Catalyzes the isomerization between 2-isopropylmalate and 3-isopropylmalate, via the formation of 2-isopropylmaleate. In Bacillus cereus (strain 03BB102), this protein is 3-isopropylmalate dehydratase small subunit.